Consider the following 99-residue polypeptide: Nucleoid-associated protein UUR10_0100 (99 aa).

Belongs to the YbaB/EbfC family. As to quaternary structure, homodimer.

It localises to the cytoplasm. The protein localises to the nucleoid. Its function is as follows. Binds to DNA and alters its conformation. May be involved in regulation of gene expression, nucleoid organization and DNA protection. This chain is Nucleoid-associated protein UUR10_0100, found in Ureaplasma urealyticum serovar 10 (strain ATCC 33699 / Western).